The sequence spans 172 residues: Large ribosomal subunit protein bL17m (172 aa).

Residues 1 to 8 (MRLSFAAA) constitute a mitochondrion transit peptide.

It belongs to the bacterial ribosomal protein bL17 family. Component of the mitochondrial ribosome large subunit (39S) which comprises a 16S rRNA and about 50 distinct proteins.

Its subcellular location is the mitochondrion. In Bos taurus (Bovine), this protein is Large ribosomal subunit protein bL17m (MRPL17).